A 549-amino-acid polypeptide reads, in one-letter code: CTP synthase (549 aa).

Positions 1–267 (MAKFVFITGG…CREVLDVLQL (267 aa)) are amidoligase domain. CTP is bound at residue Ser13. A UTP-binding site is contributed by Ser13. ATP is bound by residues 14 to 19 (SIGKGI) and Asp71. Residues Asp71 and Glu141 each coordinate Mg(2+). CTP is bound by residues 148 to 150 (DIE), 188 to 193 (KTKPTQ), and Lys224. Residues 188-193 (KTKPTQ) and Lys224 each bind UTP. A Glutamine amidotransferase type-1 domain is found at 292–534 (KVALVGKYVQ…IEAAQQRLPD (243 aa)). Gly354 lines the L-glutamine pocket. Cys381 (nucleophile; for glutamine hydrolysis) is an active-site residue. Residues 382–385 (LGMQ), Glu405, and Arg462 each bind L-glutamine. Active-site residues include His507 and Glu509.

It belongs to the CTP synthase family. As to quaternary structure, homotetramer.

The enzyme catalyses UTP + L-glutamine + ATP + H2O = CTP + L-glutamate + ADP + phosphate + 2 H(+). It carries out the reaction L-glutamine + H2O = L-glutamate + NH4(+). It catalyses the reaction UTP + NH4(+) + ATP = CTP + ADP + phosphate + 2 H(+). Its pathway is pyrimidine metabolism; CTP biosynthesis via de novo pathway; CTP from UDP: step 2/2. Allosterically activated by GTP, when glutamine is the substrate; GTP has no effect on the reaction when ammonia is the substrate. The allosteric effector GTP functions by stabilizing the protein conformation that binds the tetrahedral intermediate(s) formed during glutamine hydrolysis. Inhibited by the product CTP, via allosteric rather than competitive inhibition. In terms of biological role, catalyzes the ATP-dependent amination of UTP to CTP with either L-glutamine or ammonia as the source of nitrogen. Regulates intracellular CTP levels through interactions with the four ribonucleotide triphosphates. This is CTP synthase from Synechococcus sp. (strain CC9902).